The following is a 178-amino-acid chain: Cytidylate kinase (178 aa).

Position 7-15 (7-15 (GLPGTGTTT)) interacts with ATP.

The protein belongs to the cytidylate kinase family. Type 2 subfamily.

It localises to the cytoplasm. The enzyme catalyses CMP + ATP = CDP + ADP. The catalysed reaction is dCMP + ATP = dCDP + ADP. The sequence is that of Cytidylate kinase from Methanococcus maripaludis (strain C5 / ATCC BAA-1333).